A 904-amino-acid chain; its full sequence is DNA mismatch repair protein MutS (904 aa).

Residue Gly655–Ser662 coordinates ATP.

The protein belongs to the DNA mismatch repair MutS family.

In terms of biological role, this protein is involved in the repair of mismatches in DNA. It is possible that it carries out the mismatch recognition step. This protein has a weak ATPase activity. In Rhizorhabdus wittichii (strain DSM 6014 / CCUG 31198 / JCM 15750 / NBRC 105917 / EY 4224 / RW1) (Sphingomonas wittichii), this protein is DNA mismatch repair protein MutS.